The sequence spans 113 residues: Putative pterin-4-alpha-carbinolamine dehydratase (113 aa).

Belongs to the pterin-4-alpha-carbinolamine dehydratase family.

It carries out the reaction (4aS,6R)-4a-hydroxy-L-erythro-5,6,7,8-tetrahydrobiopterin = (6R)-L-erythro-6,7-dihydrobiopterin + H2O. The chain is Putative pterin-4-alpha-carbinolamine dehydratase from Nitrosospira multiformis (strain ATCC 25196 / NCIMB 11849 / C 71).